Here is a 1129-residue protein sequence, read N- to C-terminus: Serine/threonine-protein kinase LATS1 (1129 aa).

Positions 1–11 (MKRGEKPEGYR) are enriched in basic and acidic residues. The interval 1-71 (MKRGEKPEGY…PRQVRNPPKF (71 aa)) is disordered. Polar residues predominate over residues 19–30 (PASNYPGSSRQM). The span at 46–64 (DASKAEHNLNKMSTEDPRQ) shows a compositional bias: basic and acidic residues. The UBA domain maps to 100–141 (EVNPQMFQDLQAAGFDEDMVIQALQKTNNRSIEAAVEFISKM). Disordered regions lie at residues 148–216 (REQM…RPLS) and 228–276 (PSNG…QTKR). Pro residues predominate over residues 235–268 (NPPPPPQVRSVTPPPPPRGQTPPPRGTTPPPPSW). Residue Thr246 is modified to Phosphothreonine. Ser278 bears the Phosphoserine mark. 4 disordered regions span residues 292 to 317 (PPGA…SQAQ), 363 to 407 (PTGS…VPQS), 432 to 492 (WPQS…TPAP), and 513 to 630 (PTHP…ESRI). Pro residues predominate over residues 300-312 (YPPPPLTTSPMNP). The PPxY motif 1 signature appears at 372–375 (PPPY). Positions 380–392 (ANGQSPSALQTGA) are enriched in polar residues. The span at 433–445 (PQSSSAPAQSSPS) shows a compositional bias: low complexity. Positions 453–481 (WQPNIPVRSNSFNNPLGSRASHSANSQPS) are enriched in polar residues. Ser463 bears the Phosphoserine; by NUAK1 and NUAK2 mark. Low complexity-rich tracts occupy residues 482-492 (ATTVTAITPAP) and 520-530 (PQPVQTVQPTP). Residues 525–654 (TVQPTPFSEG…HVENVLKSHQ (130 aa)) are interaction with YAP1. Positions 555-558 (PPPY) match the PPxY motif 2 motif. The segment covering 578–608 (PCKDEQPSLPKEDDSEKSADSGDSGDKEKKQ) has biased composition (basic and acidic residues). Ser612 carries the phosphoserine modification. Basic and acidic residues predominate over residues 620–629 (KKDEERRESR). A Phosphoserine modification is found at Ser673. The 306-residue stretch at 704–1009 (FVKIKTLGIG…ADEIKAHPFF (306 aa)) folds into the Protein kinase domain. ATP-binding positions include 710–718 (LGIGAFGEV) and Lys733. The Proton acceptor role is filled by Asp827. Ser908 carries the phosphoserine; by STK3/MST2 modification. Residues 1010–1089 (KTIDFSSDLR…RRFFDDNGYP (80 aa)) form the AGC-kinase C-terminal domain. Thr1078 carries the post-translational modification Phosphothreonine; by STK3/MST2. The segment at 1104 to 1129 (QGSEQQSDEDDQHTSSDGNNRDLVYV) is disordered.

The protein belongs to the protein kinase superfamily. AGC Ser/Thr protein kinase family. In terms of assembly, complexes with CDK1 in early mitosis. LATS1-associated CDK1 has no mitotic cyclin partner and no apparent kinase activity. Binds phosphorylated ZYX, locating this protein to the mitotic spindle and suggesting a role for actin regulatory proteins during mitosis. Binds to and colocalizes with LIMK1 at the actomyosin contractile ring during cytokinesis. Interacts (via PPxY motif 2) with YAP1 (via WW domains). Interacts with MOB1A and MOB1B. Interacts with LIMD1, WTIP and AJUBA. Interacts with ESR1, DCAF1 and DCAF13; probably recruits DCAF1 and DCAF13 to ESR1 to promote ESR1 ubiquitination and ubiquitin-mediated proteasomal degradation. Interacts with STK3/MST2; this interaction is inhibited in the presence of DLG5. Interacts with SCRIB in the presence of DLG5. Interacts with WWTR1/TAZ. Interacts with WWC1, WWC2 and WWC3 (via their WW domains). It depends on Mg(2+) as a cofactor. Post-translationally, autophosphorylated and phosphorylated during M-phase of the cell cycle. Phosphorylated by STK3/MST2 at Ser-908 and Thr-1078, which results in its activation. Phosphorylated by MAP4Ks; in parallel to STK3/MST2 and resulting to its activation. Phosphorylation at Ser-463 by NUAK1 and NUAK2 leads to decreased protein level and is required to regulate cellular senescence and cellular ploidy.

The protein resides in the cytoplasm. It localises to the cytoskeleton. The protein localises to the microtubule organizing center. Its subcellular location is the centrosome. It is found in the spindle. The protein resides in the midbody. It localises to the spindle pole body. The catalysed reaction is L-seryl-[protein] + ATP = O-phospho-L-seryl-[protein] + ADP + H(+). It carries out the reaction L-threonyl-[protein] + ATP = O-phospho-L-threonyl-[protein] + ADP + H(+). Its function is as follows. Negative regulator of YAP1 in the Hippo signaling pathway that plays a pivotal role in organ size control and tumor suppression by restricting proliferation and promoting apoptosis. The core of this pathway is composed of a kinase cascade wherein STK3/MST2 and STK4/MST1, in complex with its regulatory protein SAV1, phosphorylates and activates LATS1/2 in complex with its regulatory protein MOB1, which in turn phosphorylates and inactivates YAP1 oncoprotein and WWTR1/TAZ. Phosphorylation of YAP1 by LATS1 inhibits its translocation into the nucleus to regulate cellular genes important for cell proliferation, cell death, and cell migration. Acts as a tumor suppressor which plays a critical role in maintenance of ploidy through its actions in both mitotic progression and the G1 tetraploidy checkpoint. Negatively regulates G2/M transition by down-regulating CDK1 kinase activity. Involved in the control of p53 expression. Affects cytokinesis by regulating actin polymerization through negative modulation of LIMK1. May also play a role in endocrine function. Plays a role in mammary gland epithelial cell differentiation, both through the Hippo signaling pathway and the intracellular estrogen receptor signaling pathway by promoting the degradation of ESR1. Acts as an activator of the NLRP3 inflammasome by mediating phosphorylation of 'Ser-265' of NLRP3 following NLRP3 palmitoylation, promoting NLRP3 activation by NEK7. In Mus musculus (Mouse), this protein is Serine/threonine-protein kinase LATS1.